The primary structure comprises 530 residues: Na(+)/H(+) antiporter NhaB (530 aa).

Helical transmembrane passes span 13–33 (FLGK…VINP), 34–54 (LVFF…EFIF), 90–110 (LVAN…IYFM), 121–141 (ILIG…TAAF), 145–165 (FLDA…FYAI), 205–225 (LLIH…VGEP), 241–261 (FIIR…LTCI), 306–326 (GLIA…VGLI), 327–347 (GLSV…HSMG), 351–371 (EEAL…AVII), 455–475 (GQAA…QLSY), and 481–501 (MALP…IFFL).

Belongs to the NhaB Na(+)/H(+) (TC 2.A.34) antiporter family.

Its subcellular location is the cell inner membrane. The catalysed reaction is 2 Na(+)(in) + 3 H(+)(out) = 2 Na(+)(out) + 3 H(+)(in). Its function is as follows. Na(+)/H(+) antiporter that extrudes sodium in exchange for external protons. This chain is Na(+)/H(+) antiporter NhaB, found in Aliivibrio fischeri (strain MJ11) (Vibrio fischeri).